We begin with the raw amino-acid sequence, 306 residues long: Ribonuclease Z (306 aa).

The Zn(2+) site is built by His-63, His-65, Asp-67, His-68, His-141, Asp-211, and His-269. Catalysis depends on Asp-67, which acts as the Proton acceptor.

It belongs to the RNase Z family. As to quaternary structure, homodimer. Zn(2+) is required as a cofactor.

The enzyme catalyses Endonucleolytic cleavage of RNA, removing extra 3' nucleotides from tRNA precursor, generating 3' termini of tRNAs. A 3'-hydroxy group is left at the tRNA terminus and a 5'-phosphoryl group is left at the trailer molecule.. Zinc phosphodiesterase, which displays some tRNA 3'-processing endonuclease activity. Probably involved in tRNA maturation, by removing a 3'-trailer from precursor tRNA. In Macrococcus caseolyticus (strain JCSC5402) (Macrococcoides caseolyticum), this protein is Ribonuclease Z.